A 785-amino-acid chain; its full sequence is Endonuclease MutS2 (785 aa).

G334–T341 contacts ATP. One can recognise a Smr domain in the interval L710–K785.

The protein belongs to the DNA mismatch repair MutS family. MutS2 subfamily. In terms of assembly, homodimer. Binds to stalled ribosomes, contacting rRNA.

Functionally, endonuclease that is involved in the suppression of homologous recombination and thus may have a key role in the control of bacterial genetic diversity. Its function is as follows. Acts as a ribosome collision sensor, splitting the ribosome into its 2 subunits. Detects stalled/collided 70S ribosomes which it binds and splits by an ATP-hydrolysis driven conformational change. Acts upstream of the ribosome quality control system (RQC), a ribosome-associated complex that mediates the extraction of incompletely synthesized nascent chains from stalled ribosomes and their subsequent degradation. Probably generates substrates for RQC. This is Endonuclease MutS2 from Lactobacillus helveticus (strain DPC 4571).